Reading from the N-terminus, the 276-residue chain is 2-dehydro-3-deoxyphosphooctonate aldolase (276 aa).

The protein belongs to the KdsA family.

The protein resides in the cytoplasm. It carries out the reaction D-arabinose 5-phosphate + phosphoenolpyruvate + H2O = 3-deoxy-alpha-D-manno-2-octulosonate-8-phosphate + phosphate. Its pathway is carbohydrate biosynthesis; 3-deoxy-D-manno-octulosonate biosynthesis; 3-deoxy-D-manno-octulosonate from D-ribulose 5-phosphate: step 2/3. It participates in bacterial outer membrane biogenesis; lipopolysaccharide biosynthesis. The polypeptide is 2-dehydro-3-deoxyphosphooctonate aldolase (Chelativorans sp. (strain BNC1)).